Here is a 542-residue protein sequence, read N- to C-terminus: Keratin, type II cytoskeletal 75 (542 aa).

Over residues 1-26 (MSRQSTVTFHSGSRRGFSTASATTPT) the composition is skewed to polar residues. Residues 1 to 44 (MSRQSTVTFHSGSRRGFSTASATTPTAGRSRFSSVSVARSSGNS) are disordered. The interval 1–139 (MSRQSTVTFH…DPTIQRVRKE (139 aa)) is head. Residues 27–42 (AGRSRFSSVSVARSSG) show a composition bias toward low complexity. Residues 140-175 (EREQIKTLNNKFASFIDKVRFLEQQNKVLETKWNLL) are coil 1A. The IF rod domain occupies 140–453 (EREQIKTLNN…KLLEGEECRL (314 aa)). Residues 176 to 194 (QEQGSRTVRQNLEPFFDAY) form a linker 1 region. The interval 195 to 287 (VNDLRRQLDS…VYEAELSQMQ (93 aa)) is coil 1B. The segment at 288-310 (NQVSDTSVVLSMDNNRSLDLDSI) is linker 12. The segment at 311–449 (IAEVKAQYED…ATYRKLLEGE (139 aa)) is coil 2. The tail stretch occupies residues 450 to 542 (ECRLSGEGVS…TSSSRKSYKH (93 aa)). The disordered stretch occupies residues 514–542 (TSSSRGPVGSGSSIKFVSSTSSSRKSYKH).

Belongs to the intermediate filament family. In terms of assembly, heterodimer of a type I and a type II keratin. May associate with KRT17.

Functionally, plays a central role in hair and nail formation. Essential component of keratin intermediate filaments in the companion layer of the hair follicle. This is Keratin, type II cytoskeletal 75 (Krt75) from Rattus norvegicus (Rat).